The chain runs to 248 residues: Cobalt transport protein CbiM (248 aa).

The first 29 residues, 1–29, serve as a signal peptide directing secretion; it reads MKRVSVKNYLVCLLIAVCAIFVFPANASA. 6 helical membrane passes run 40–60, 72–92, 104–124, 136–156, 167–187, and 210–230; these read GWCISWGVMCMPFLVIGFFSI, TLLAMCGAFAFVLSALKMPSV, LGAVLFGPTAMSVIGAIILLF, TLGANVFSMAIVGPLVSFGVF, GLAVFLAVFFGDLMTYVITSV, and IFGFTQVPLAVCEGLLTVVIY.

This sequence belongs to the CbiM family. In terms of assembly, forms an energy-coupling factor (ECF) transporter complex composed of an ATP-binding protein (A component, CbiO), a transmembrane protein (T component, CbiQ) and 2 possible substrate-capture proteins (S components, CbiM and CbiN) of unknown stoichimetry.

Its subcellular location is the cell membrane. It participates in cofactor biosynthesis; adenosylcobalamin biosynthesis. Functionally, part of the energy-coupling factor (ECF) transporter complex CbiMNOQ involved in cobalt import. This Ruminiclostridium cellulolyticum (strain ATCC 35319 / DSM 5812 / JCM 6584 / H10) (Clostridium cellulolyticum) protein is Cobalt transport protein CbiM.